Reading from the N-terminus, the 145-residue chain is uncharacterized protein (145 aa).

Residues 46–66 (FFFLFFLFFFFFFTFQFLVAF) form a helical membrane-spanning segment.

The protein resides in the membrane. This is an uncharacterized protein from Saccharomyces cerevisiae (strain ATCC 204508 / S288c) (Baker's yeast).